Reading from the N-terminus, the 276-residue chain is MASLSFVSSSHLTLRTPSIALRSTGSSPRTSVSFSVKAQSVALSQDDLKKLAAEKAVEAIKPGMVLGLGTGSTAAFAVDQIGKLLSSGELYDIVGIPTSKRTEEQARSLGIPLVGLDTHPRIDLAIDGADEVDPNLDLVKGRGGALLREKMVEAVADKFIVVADDTKLVTGLGGSGLAMPVEVVQFCWNFNLIRLQDLFKEFGCESKLRVDGDGKPYVTDNSNYIIDLYFKTPLKDGFAAAKEIGKFQGVVEHGLFLGMATSVIIAGKNGVEVMTK.

The transit peptide at 1-39 directs the protein to the chloroplast; sequence MASLSFVSSSHLTLRTPSIALRSTGSSPRTSVSFSVKAQ. S40 bears the N-acetylserine mark. A Phosphoserine modification is found at S108.

This sequence belongs to the ribose 5-phosphate isomerase family. Phosphorylated by SRK2C.

The protein resides in the plastid. It is found in the chloroplast. The catalysed reaction is aldehydo-D-ribose 5-phosphate = D-ribulose 5-phosphate. It participates in carbohydrate degradation; pentose phosphate pathway; D-ribose 5-phosphate from D-ribulose 5-phosphate (non-oxidative stage): step 1/1. Catalyzes the reversible conversion of ribose-5-phosphate to ribulose 5-phosphate. The sequence is that of Probable ribose-5-phosphate isomerase 3, chloroplastic (RPI3) from Arabidopsis thaliana (Mouse-ear cress).